Here is a 123-residue protein sequence, read N- to C-terminus: Large ribosomal subunit protein uL14 (123 aa).

The protein belongs to the universal ribosomal protein uL14 family. Part of the 50S ribosomal subunit. Forms a cluster with proteins L3 and L19. In the 70S ribosome, L14 and L19 interact and together make contacts with the 16S rRNA in bridges B5 and B8.

Binds to 23S rRNA. Forms part of two intersubunit bridges in the 70S ribosome. The polypeptide is Large ribosomal subunit protein uL14 (Enterobacter sp. (strain 638)).